Consider the following 116-residue polypeptide: Flagellar transcriptional regulator FlhD (116 aa).

It belongs to the FlhD family. In terms of assembly, homodimer; disulfide-linked. Forms a heterohexamer composed of two FlhC and four FlhD subunits. Each FlhC binds a FlhD dimer, forming a heterotrimer, and a hexamer assembles by dimerization of two heterotrimers.

The protein localises to the cytoplasm. In terms of biological role, functions in complex with FlhC as a master transcriptional regulator that regulates transcription of several flagellar and non-flagellar operons by binding to their promoter region. Activates expression of class 2 flagellar genes, including fliA, which is a flagellum-specific sigma factor that turns on the class 3 genes. Also regulates genes whose products function in a variety of physiological pathways. The protein is Flagellar transcriptional regulator FlhD of Escherichia coli O9:H4 (strain HS).